Here is an 86-residue protein sequence, read N- to C-terminus: Putative membrane protein insertion efficiency factor (86 aa).

This sequence belongs to the UPF0161 family.

It localises to the cell inner membrane. In terms of biological role, could be involved in insertion of integral membrane proteins into the membrane. The protein is Putative membrane protein insertion efficiency factor of Pseudomonas aeruginosa (strain UCBPP-PA14).